The following is a 201-amino-acid chain: Holliday junction branch migration complex subunit RuvA (201 aa).

The tract at residues 1 to 64 is domain I; that stretch reads MYAYIRGKLT…EDAQLLYGFI (64 aa). A domain II region spans residues 65 to 143; it reads NEEEKDMFLS…ITRETTETLL (79 aa). The flexible linker stretch occupies residues 144–150; the sequence is SMNEENS. The tract at residues 151 to 201 is domain III; that stretch reads NSENLVKEALLALEALGYSKREISKVEKVLNKSTFDSVDEAVKLGLKTLVS.

This sequence belongs to the RuvA family. As to quaternary structure, homotetramer. Forms an RuvA(8)-RuvB(12)-Holliday junction (HJ) complex. HJ DNA is sandwiched between 2 RuvA tetramers; dsDNA enters through RuvA and exits via RuvB. An RuvB hexamer assembles on each DNA strand where it exits the tetramer. Each RuvB hexamer is contacted by two RuvA subunits (via domain III) on 2 adjacent RuvB subunits; this complex drives branch migration. In the full resolvosome a probable DNA-RuvA(4)-RuvB(12)-RuvC(2) complex forms which resolves the HJ.

The protein localises to the cytoplasm. Its function is as follows. The RuvA-RuvB-RuvC complex processes Holliday junction (HJ) DNA during genetic recombination and DNA repair, while the RuvA-RuvB complex plays an important role in the rescue of blocked DNA replication forks via replication fork reversal (RFR). RuvA specifically binds to HJ cruciform DNA, conferring on it an open structure. The RuvB hexamer acts as an ATP-dependent pump, pulling dsDNA into and through the RuvAB complex. HJ branch migration allows RuvC to scan DNA until it finds its consensus sequence, where it cleaves and resolves the cruciform DNA. The sequence is that of Holliday junction branch migration complex subunit RuvA from Staphylococcus haemolyticus (strain JCSC1435).